Reading from the N-terminus, the 156-residue chain is MSRKTYEKIANINGMFNMLEQQIIHSQDMAHFRSEFFYVNHEHRENYEALLIYYKNSIDNPIVDGACYILALPEIFNSVDVFESELPFSWVYDENGITETMKSLSIPLQYLVAAALEVTDVNIFKPSGFTMGMNNWNIAQMRIFWQYTAIIRKEAL.

This is an uncharacterized protein from Staphylococcus aureus (strain MW2).